Here is a 606-residue protein sequence, read N- to C-terminus: DNA ligase (606 aa).

E263 contacts ATP. Catalysis depends on K265, which acts as the N6-AMP-lysine intermediate. ATP-binding residues include R270, R285, E315, F355, R432, and K438.

The protein belongs to the ATP-dependent DNA ligase family. The cofactor is Mg(2+). Mn(2+) is required as a cofactor.

It carries out the reaction ATP + (deoxyribonucleotide)n-3'-hydroxyl + 5'-phospho-(deoxyribonucleotide)m = (deoxyribonucleotide)n+m + AMP + diphosphate.. It catalyses the reaction ADP + (deoxyribonucleotide)n-3'-hydroxyl + 5'-phospho-(deoxyribonucleotide)m = (deoxyribonucleotide)n+m + AMP + phosphate.. The enzyme catalyses GTP + (deoxyribonucleotide)n-3'-hydroxyl + 5'-phospho-(deoxyribonucleotide)m = (deoxyribonucleotide)n+m + GMP + diphosphate.. DNA ligase that seals nicks in double-stranded DNA during DNA replication, DNA recombination and DNA repair. Can use ATP, ADP and GTP, but not CTP, TTP or NAD(+). In Sulfophobococcus zilligii, this protein is DNA ligase.